The sequence spans 234 residues: 2-phospho-L-lactate guanylyltransferase (234 aa).

It belongs to the CofC family. Homodimer.

It catalyses the reaction (2S)-2-phospholactate + GTP + H(+) = (2S)-lactyl-2-diphospho-5'-guanosine + diphosphate. It participates in cofactor biosynthesis; coenzyme F420 biosynthesis. Its function is as follows. Guanylyltransferase that catalyzes the activation of (2S)-2-phospholactate (2-PL) as (2S)-lactyl-2-diphospho-5'-guanosine, via the condensation of 2-PL with GTP. It is involved in the biosynthesis of coenzyme F420, a hydride carrier cofactor. The sequence is that of 2-phospho-L-lactate guanylyltransferase from Methanobrevibacter ruminantium (strain ATCC 35063 / DSM 1093 / JCM 13430 / OCM 146 / M1) (Methanobacterium ruminantium).